Here is a 75-residue protein sequence, read N- to C-terminus: Small ribosomal subunit protein bS18 (75 aa).

The protein belongs to the bacterial ribosomal protein bS18 family. As to quaternary structure, part of the 30S ribosomal subunit. Forms a tight heterodimer with protein bS6.

Binds as a heterodimer with protein bS6 to the central domain of the 16S rRNA, where it helps stabilize the platform of the 30S subunit. The polypeptide is Small ribosomal subunit protein bS18 (Cellvibrio japonicus (strain Ueda107) (Pseudomonas fluorescens subsp. cellulosa)).